A 696-amino-acid polypeptide reads, in one-letter code: Iron-sulfur clusters transporter ATM1, mitochondrial (696 aa).

The N-terminal 67 residues, 1 to 67 (MIKWGLFGAV…RFFSSSHKLG (67 aa)), are a transit peptide targeting the mitochondrion. Residues 68–109 (VNTKEDSSTYLFGRKISTSESKMLKSLLVTIWPKNKPSFKLR) are Mitochondrial matrix-facing. The chain crosses the membrane as a helical span at residues 110-131 (VIFALSLLIASKLLNVEVPFFF). The ABC transmembrane type-1 domain maps to 110 to 400 (VIFALSLLIA…LGSVYRELKQ (291 aa)). The Mitochondrial intermembrane segment spans residues 132–154 (KKIIDEMNVDWNDQLGTVGTVIG). A helical membrane pass occupies residues 155–178 (TLIIAYGGARFGAVLFGELRNAVF). Residues 179 to 227 (ASVAQTAIKRVAHNTFVHLLNMDLNFHLSRQTGGLTRAIDRGTKGISYV) lie on the Mitochondrial matrix side of the membrane. Residues 228 to 251 (LNAMVFHIIPISFEISMVCGILIY) form a helical membrane-spanning segment. Position 252 (asparagine 252) is a topological domain, mitochondrial intermembrane. Residues 253-273 (YGLSFAAVTLATMLSYSVFTI) form a helical membrane-spanning segment. The Mitochondrial matrix segment spans residues 274-339 (KTTAWRTGFR…ASVKVATSLA (66 aa)). Glutathione contacts are provided by residues 279–283 (RTGFR) and 342–345 (NAGQ). A helical transmembrane segment spans residues 340–358 (YLNAGQNFIFTSALTAMMY). Residues 359 to 373 (MGCNGVATGSLTVGD) are Mitochondrial intermembrane-facing. A helical membrane pass occupies residues 374–395 (LVLINQLVFQLSVPLSFLGSVY). Residue glycine 392 participates in glutathione binding. The Mitochondrial matrix portion of the chain corresponds to 396–696 (RELKQSLLDM…EYAKETEEQK (301 aa)). The region spanning 438 to 674 (IKFENVTFGY…PNSLYSQLWN (237 aa)) is the ABC transporter domain. Residues tyrosine 447 and 471–482 (GPSGSGKSTILR) contribute to the ATP site.

The protein belongs to the ABC transporter superfamily. ABCB family. Heavy Metal importer (TC 3.A.1.210) subfamily. In terms of assembly, homodimer.

The protein localises to the mitochondrion inner membrane. Its function is as follows. Performs an essential function in the generation of cytoplasmic iron-sulfur proteins by mediating the ATP-dependent export of Fe/S cluster precursors synthesized by NFS1 and other mitochondrial proteins. Hydrolyzes ATP. Binds glutathione and may function by transporting a glutathione-conjugated iron-sulfur compound. This Debaryomyces hansenii (strain ATCC 36239 / CBS 767 / BCRC 21394 / JCM 1990 / NBRC 0083 / IGC 2968) (Yeast) protein is Iron-sulfur clusters transporter ATM1, mitochondrial.